A 541-amino-acid polypeptide reads, in one-letter code: Membrane protein insertase YidC (541 aa).

Transmembrane regions (helical) follow at residues 6–26 (NILL…WQAD), 349–369 (FVGN…GLLF), 420–440 (GGCL…WVLL), 457–477 (LSVQ…MFVM), and 500–520 (MIFT…WLVG).

The protein belongs to the OXA1/ALB3/YidC family. Type 1 subfamily. As to quaternary structure, interacts with the Sec translocase complex via SecD. Specifically interacts with transmembrane segments of nascent integral membrane proteins during membrane integration.

It localises to the cell inner membrane. In terms of biological role, required for the insertion and/or proper folding and/or complex formation of integral membrane proteins into the membrane. Involved in integration of membrane proteins that insert both dependently and independently of the Sec translocase complex, as well as at least some lipoproteins. Aids folding of multispanning membrane proteins. In Shewanella sp. (strain ANA-3), this protein is Membrane protein insertase YidC.